The sequence spans 501 residues: Envelope glycoprotein C homolog (501 aa).

Residues 1-27 (MLTPRVLRALGWTGLFFLLLSPSNVLG) form the signal peptide. Topologically, residues 28–465 (ASLSRDLETP…DATPAARGTP (438 aa)) are virion surface. Asn-46 is a glycosylation site (N-linked (GlcNAc...) asparagine; by host). The disordered stretch occupies residues 53 to 86 (PLTEVPHAPSTESVSTNSESTNEHTITETTGKNA). Low complexity predominate over residues 62 to 72 (STESVSTNSES). Asn-91, Asn-100, Asn-120, Asn-212, Asn-354, Asn-400, and Asn-429 each carry an N-linked (GlcNAc...) asparagine; by host glycan. One can recognise an Ig-like domain in the interval 258-356 (PASVDVLAPP…GDMISTTNAT (99 aa)). A helical membrane pass occupies residues 466–492 (MVITVTAVLGLAVILGMGIIMTALCLY). Over 493–501 (NSTRKNIRL) the chain is Cytoplasmic.

It belongs to the herpesviridae glycoprotein C family.

It is found in the secreted. The protein resides in the host cell membrane. Functionally, may play an immunoevasive role in the pathogenesis of Marek's disease. It is a candidate for causing the early-stage immunosuppression that occurs after MDHV infection. The polypeptide is Envelope glycoprotein C homolog (gC) (Gallus gallus (Chicken)).